A 385-amino-acid polypeptide reads, in one-letter code: Methionine aminopeptidase 1 (385 aa).

The segment at 6 to 59 (SRVCETEGCSSEAKLQCPTCIKLGIQGSYFCSQECFKGSWATHKLLHKKAKDDK) adopts a C6H2-type zinc-finger fold. Zn(2+)-binding residues include cysteine 9, cysteine 14, cysteine 22, cysteine 25, cysteine 36, cysteine 40, histidine 48, and histidine 52. Histidine 203 lines the a protein pocket. Zn(2+) is bound by residues aspartate 220, aspartate 231, and histidine 294. An a protein-binding site is contributed by histidine 301. Residues glutamate 327 and glutamate 358 each coordinate Zn(2+).

This sequence belongs to the peptidase M24A family. Methionine aminopeptidase type 1 subfamily. Associates with the 60S ribosomal subunit of the 80S translational complex. It depends on Zn(2+) as a cofactor. Requires Co(2+) as cofactor. Mn(2+) is required as a cofactor. The cofactor is Fe(2+).

The protein resides in the cytoplasm. The catalysed reaction is Release of N-terminal amino acids, preferentially methionine, from peptides and arylamides.. Functionally, cotranslationally removes the N-terminal methionine from nascent proteins. The N-terminal methionine is often cleaved when the second residue in the primary sequence is small and uncharged (Met-Ala-, Cys, Gly, Pro, Ser, Thr, or Val). This Xenopus laevis (African clawed frog) protein is Methionine aminopeptidase 1 (metap1).